The sequence spans 504 residues: Deoxyguanosinetriphosphate triphosphohydrolase (504 aa).

The region spanning 66–273 (RLTHSLEVQQ…MEAADDISYC (208 aa)) is the HD domain.

This sequence belongs to the dGTPase family. Type 1 subfamily. As to quaternary structure, homotetramer. Mg(2+) is required as a cofactor.

It carries out the reaction dGTP + H2O = 2'-deoxyguanosine + triphosphate + H(+). In terms of biological role, dGTPase preferentially hydrolyzes dGTP over the other canonical NTPs. The chain is Deoxyguanosinetriphosphate triphosphohydrolase from Klebsiella pneumoniae (strain 342).